Reading from the N-terminus, the 490-residue chain is Tektin-3 (490 aa).

Residues Thr7 and Thr9 are each glycosylated (O-linked (GalNAc...) threonine). Residues Asn41, Asn86, Asn111, and Asn276 are each glycosylated (N-linked (GlcNAc...) asparagine). A coiled-coil region spans residues 419–456 (RLVNEVYEVDETIQTLQQRLRDSEDTLQSLAHTKATLE).

Belongs to the tektin family. Microtubule inner protein component of sperm flagellar doublet microtubules. Interacts with TEKT1, TEKT2, TEKT4 and TEKT5. Interacts with CCDC38. Post-translationally, N- and O-glycosylated. In terms of processing, may be proteolytically processed during the epididymal transit of spermatozoa. Ubiquitinated, leading to its degradation. Deubiquitinated by USP16, promoting its stability. Expressed in epididymal sperm (at protein level).

The protein resides in the cytoplasm. Its subcellular location is the cytoskeleton. It is found in the cilium axoneme. The protein localises to the flagellum axoneme. It localises to the cytoplasmic vesicle. The protein resides in the secretory vesicle. Its subcellular location is the acrosome outer membrane. Its function is as follows. Microtubule inner protein (MIP) part of the dynein-decorated doublet microtubules (DMTs) in cilia and flagellar axoneme. Forms filamentous polymers in the walls of ciliary and flagellar microtubules. Required for normal sperm mobility. This chain is Tektin-3 (Tekt3), found in Rattus norvegicus (Rat).